We begin with the raw amino-acid sequence, 459 residues long: Argininosuccinate lyase (459 aa).

Belongs to the lyase 1 family. Argininosuccinate lyase subfamily.

It localises to the cytoplasm. The catalysed reaction is 2-(N(omega)-L-arginino)succinate = fumarate + L-arginine. It participates in amino-acid biosynthesis; L-arginine biosynthesis; L-arginine from L-ornithine and carbamoyl phosphate: step 3/3. In Staphylococcus aureus (strain MRSA252), this protein is Argininosuccinate lyase.